Reading from the N-terminus, the 321-residue chain is Putative ribose-phosphate pyrophosphokinase 2 (321 aa).

ATP-binding positions include 43–45 and 102–103; these read DGE and RQ. The Mg(2+) site is built by His-136 and Asp-176. Residue Asp-225 participates in D-ribose 5-phosphate binding.

This sequence belongs to the ribose-phosphate pyrophosphokinase family. Class I subfamily. Homohexamer. The cofactor is Mg(2+).

The protein localises to the cytoplasm. The catalysed reaction is D-ribose 5-phosphate + ATP = 5-phospho-alpha-D-ribose 1-diphosphate + AMP + H(+). It participates in metabolic intermediate biosynthesis; 5-phospho-alpha-D-ribose 1-diphosphate biosynthesis; 5-phospho-alpha-D-ribose 1-diphosphate from D-ribose 5-phosphate (route I): step 1/1. Its function is as follows. Involved in the biosynthesis of the central metabolite phospho-alpha-D-ribosyl-1-pyrophosphate (PRPP) via the transfer of pyrophosphoryl group from ATP to 1-hydroxyl of ribose-5-phosphate (Rib-5-P). The sequence is that of Putative ribose-phosphate pyrophosphokinase 2 from Lactiplantibacillus plantarum (strain ATCC BAA-793 / NCIMB 8826 / WCFS1) (Lactobacillus plantarum).